A 314-amino-acid chain; its full sequence is 4-hydroxy-3-methylbut-2-enyl diphosphate reductase (314 aa).

A [4Fe-4S] cluster-binding site is contributed by Cys-12. (2E)-4-hydroxy-3-methylbut-2-enyl diphosphate contacts are provided by His-41 and His-74. The dimethylallyl diphosphate site is built by His-41 and His-74. His-41 and His-74 together coordinate isopentenyl diphosphate. Cys-96 serves as a coordination point for [4Fe-4S] cluster. His-124 lines the (2E)-4-hydroxy-3-methylbut-2-enyl diphosphate pocket. His-124 contributes to the dimethylallyl diphosphate binding site. Residue His-124 coordinates isopentenyl diphosphate. Catalysis depends on Glu-126, which acts as the Proton donor. A (2E)-4-hydroxy-3-methylbut-2-enyl diphosphate-binding site is contributed by Thr-167. Position 197 (Cys-197) interacts with [4Fe-4S] cluster. Residues Ser-225, Ser-226, Asn-227, and Ser-269 each coordinate (2E)-4-hydroxy-3-methylbut-2-enyl diphosphate. 4 residues coordinate dimethylallyl diphosphate: Ser-225, Ser-226, Asn-227, and Ser-269. Isopentenyl diphosphate is bound by residues Ser-225, Ser-226, Asn-227, and Ser-269.

Belongs to the IspH family. [4Fe-4S] cluster serves as cofactor.

The enzyme catalyses isopentenyl diphosphate + 2 oxidized [2Fe-2S]-[ferredoxin] + H2O = (2E)-4-hydroxy-3-methylbut-2-enyl diphosphate + 2 reduced [2Fe-2S]-[ferredoxin] + 2 H(+). It carries out the reaction dimethylallyl diphosphate + 2 oxidized [2Fe-2S]-[ferredoxin] + H2O = (2E)-4-hydroxy-3-methylbut-2-enyl diphosphate + 2 reduced [2Fe-2S]-[ferredoxin] + 2 H(+). It participates in isoprenoid biosynthesis; dimethylallyl diphosphate biosynthesis; dimethylallyl diphosphate from (2E)-4-hydroxy-3-methylbutenyl diphosphate: step 1/1. Its pathway is isoprenoid biosynthesis; isopentenyl diphosphate biosynthesis via DXP pathway; isopentenyl diphosphate from 1-deoxy-D-xylulose 5-phosphate: step 6/6. Catalyzes the conversion of 1-hydroxy-2-methyl-2-(E)-butenyl 4-diphosphate (HMBPP) into a mixture of isopentenyl diphosphate (IPP) and dimethylallyl diphosphate (DMAPP). Acts in the terminal step of the DOXP/MEP pathway for isoprenoid precursor biosynthesis. This chain is 4-hydroxy-3-methylbut-2-enyl diphosphate reductase, found in Actinobacillus succinogenes (strain ATCC 55618 / DSM 22257 / CCUG 43843 / 130Z).